A 556-amino-acid polypeptide reads, in one-letter code: Man(5)GlcNAc(2)-PP-dolichol translocation protein RFT1 (556 aa).

12 helical membrane passes run 10–30 (LLGA…TFGI), 41–61 (EVLG…LFLS), 91–111 (LTVP…LNWL), 129–149 (VAFS…AQVF), 156–176 (ILLN…IVTG), 184–204 (AFAI…YGFF), 353–373 (SVLN…FTFG), 389–409 (FVAG…IYLL), 440–460 (VSFL…GFIF), 461–477 (ANCI…TYYI), 489–509 (LLGL…GIVC), and 517–537 (LATH…SWAL).

Belongs to the RFT1 family.

The protein localises to the endoplasmic reticulum membrane. It functions in the pathway protein modification; protein glycosylation. Its function is as follows. Intramembrane glycolipid transporter that operates in the biosynthetic pathway of dolichol-linked oligosaccharides, the glycan precursors employed in protein asparagine (N)-glycosylation. The sequential addition of sugars to dolichol pyrophosphate produces dolichol-linked oligosaccharides containing fourteen sugars, including two GlcNAcs, nine mannoses and three glucoses. Once assembled, the oligosaccharide is transferred from the lipid to nascent proteins by oligosaccharyltransferases. The assembly of dolichol-linked oligosaccharides begins on the cytosolic side of the endoplasmic reticulum membrane and finishes in its lumen. RFT1 could mediate the translocation of the cytosolically oriented intermediate DolPP-GlcNAc2Man5, produced by ALG11, into the ER lumen where dolichol-linked oligosaccharides assembly continues. However, the intramembrane lipid transporter activity could not be confirmed in vitro. The polypeptide is Man(5)GlcNAc(2)-PP-dolichol translocation protein RFT1 (Drosophila melanogaster (Fruit fly)).